The primary structure comprises 320 residues: NAC domain-containing protein 20 (320 aa).

One can recognise an NAC domain in the interval 14 to 170 (LPPGFRFHPT…DWAVCRIFHK (157 aa)). A DNA-binding region spans residues 114-176 (IGMKKTLVFY…IFHKSSGIKK (63 aa)).

In terms of assembly, forms homodimers. Forms heterodimers with NAC26. In terms of tissue distribution, expressed in developing seeds.

The protein resides in the nucleus. Its subcellular location is the endoplasmic reticulum. Transcription factor that acts redundantly with NAC26 to regulate the expression of genes involved in the biosynthesis of starch and storage proteins in grain. Directly binds to the promoters of starch synthase 1 (SS1), pullulanase (PUL), glutelin A1 (GLUA1), glutelins B4 and B5 (GLUB4 and GLUB5), alpha-globulin and 16 kDa prolamin, and activates their expression. Possesses transactivation activity in yeast. The polypeptide is NAC domain-containing protein 20 (Oryza sativa subsp. indica (Rice)).